We begin with the raw amino-acid sequence, 266 residues long: Short-chain dehydrogenase/reductase AacuF (266 aa).

Leucine 13, aspartate 57, and asparagine 85 together coordinate NADP(+). Residues serine 145 and tyrosine 164 each act as proton donor in the active site. Positions 164, 168, and 198 each coordinate NADP(+). Lysine 168 functions as the Lowers pKa of active site Tyr in the catalytic mechanism.

This sequence belongs to the short-chain dehydrogenases/reductases (SDR) family.

The protein operates within secondary metabolite biosynthesis. In terms of biological role, short-chain dehydrogenase/reductase; part of the gene cluster that mediates the biosynthesis of the tetrahydroxanthone dimer secalonic acid D. The pathway begins with the synthesis of atrochrysone thioester by the polyketide synthase AacuL. The atrochrysone carboxyl ACP thioesterase AacuM then breaks the thioester bond and releases the atrochrysone carboxylic acid from AacuL. Atrochrysone carboxylic acid is decarboxylated by the decarboxylase AacuI, and oxidized by the anthrone oxygenase AacuG to yield emodin. Emodin is then reduced to emodin hydroquinone by a yet unidentified oxidoreductase. A-ring reduction by the short chain dehydrogenase AacuN, dehydration by the scytalone dehydratase-like protein AacuK and probable spontaneous re-oxidation, results in overall deoxygenation to chrysophanol. Baeyer-Villiger oxidation by the Baeyer-Villiger monooxygenase (BVMO) AacuH then yields monodictyphenone. Monodictyphenone is transformed into compounds with the tetrahydroxanthone skeleton via methylesterification by the methyltransferase AacuQ, followed by the action of the flavin-dependent monooxygenase AacuC, the isomerase AacuP, and the short chain dehydrogenase/reductase AacuF or AacuD. AacuF and AacuD should accept the same compound as a substrate but perform the ketoreduction with a different stereoselectivity, thus yielding blennolides B and A, respectively. In the final step of the biosynthesis, the cytochrome P450 monooxygenase AacuE accepts blennolide B and/or blennolide A to conduct the dimerization reaction to furnish the tetrahydroxanthone dimers, secalonic acids D, B, and F. The polypeptide is Short-chain dehydrogenase/reductase AacuF (Aspergillus aculeatus (strain ATCC 16872 / CBS 172.66 / WB 5094)).